The primary structure comprises 213 residues: Glycerol-3-phosphate acyltransferase (213 aa).

5 consecutive transmembrane segments (helical) span residues 3 to 23 (ILLA…VVVS), 51 to 71 (KAAI…VWLA), 78 to 98 (DVAV…PVFF), 115 to 135 (AVHP…AFFF), and 140 to 160 (LAAL…FGTP).

It belongs to the PlsY family. Probably interacts with PlsX.

It localises to the cell inner membrane. It catalyses the reaction an acyl phosphate + sn-glycerol 3-phosphate = a 1-acyl-sn-glycero-3-phosphate + phosphate. Its pathway is lipid metabolism; phospholipid metabolism. Catalyzes the transfer of an acyl group from acyl-phosphate (acyl-PO(4)) to glycerol-3-phosphate (G3P) to form lysophosphatidic acid (LPA). This enzyme utilizes acyl-phosphate as fatty acyl donor, but not acyl-CoA or acyl-ACP. The protein is Glycerol-3-phosphate acyltransferase of Burkholderia cenocepacia (strain ATCC BAA-245 / DSM 16553 / LMG 16656 / NCTC 13227 / J2315 / CF5610) (Burkholderia cepacia (strain J2315)).